The primary structure comprises 357 residues: Serine protease 1 (357 aa).

The signal sequence occupies residues 1-29 (MRRTTRARTGLSALLLAASLGLGAAPAGA). Positions 30–170 (DAPQRPAPTP…TRVPGVFQRE (141 aa)) are excised as a propeptide. An intrachain disulfide couples Cys-184 to Cys-204. Active-site charge relay system residues include His-203, Asp-232, and Ser-313. A disulfide bridge links Cys-307 with Cys-333.

The protein belongs to the peptidase S1 family.

It is found in the secreted. Its function is as follows. Serine protease that preferentially cleaves peptide bonds on the C-terminal side of aspartate and glutamate with a 10-fold higher reactivity for a glutamyl bond than an aspartyl bond. The chain is Serine protease 1 from Streptomyces fradiae (Streptomyces roseoflavus).